The following is a 654-amino-acid chain: Tumor necrosis factor alpha-induced protein 2 (654 aa).

Disordered stretches follow at residues 1–38 (MSEA…KKSK) and 50–78 (GKKK…PPPT). The segment covering 28–38 (KKKKEKKKKSK) has biased composition (basic residues).

This sequence belongs to the SEC6 family.

In terms of biological role, may play a role as a mediator of inflammation and angiogenesis. The chain is Tumor necrosis factor alpha-induced protein 2 (TNFAIP2) from Homo sapiens (Human).